A 256-amino-acid polypeptide reads, in one-letter code: Thiazole synthase (256 aa).

Catalysis depends on lysine 95, which acts as the Schiff-base intermediate with DXP. 1-deoxy-D-xylulose 5-phosphate contacts are provided by residues glycine 156, 182–183, and 204–205; these read AG and NT.

Belongs to the ThiG family. Homotetramer. Forms heterodimers with either ThiH or ThiS.

The protein resides in the cytoplasm. It carries out the reaction [ThiS sulfur-carrier protein]-C-terminal-Gly-aminoethanethioate + 2-iminoacetate + 1-deoxy-D-xylulose 5-phosphate = [ThiS sulfur-carrier protein]-C-terminal Gly-Gly + 2-[(2R,5Z)-2-carboxy-4-methylthiazol-5(2H)-ylidene]ethyl phosphate + 2 H2O + H(+). It functions in the pathway cofactor biosynthesis; thiamine diphosphate biosynthesis. Functionally, catalyzes the rearrangement of 1-deoxy-D-xylulose 5-phosphate (DXP) to produce the thiazole phosphate moiety of thiamine. Sulfur is provided by the thiocarboxylate moiety of the carrier protein ThiS. In vitro, sulfur can be provided by H(2)S. This is Thiazole synthase from Escherichia coli O157:H7.